The primary structure comprises 685 residues: Potassium-transporting ATPase ATP-binding subunit (685 aa).

The next 4 helical transmembrane spans lie at 36–56 (MFVVEVGFFVTILLTIFPSIF), 68–88 (LIVTIILFITVLFANFAESVA), 218–238 (IALNTILVSLTLIFLIVLVAL), and 255–275 (IALLVCLIPTTIGGLLSAIGI). Residue Asp-306 is the 4-aspartylphosphate intermediate of the active site. ATP contacts are provided by residues Asp-343, Glu-347, 375–382 (FTAQTRMS), and Lys-394. Mg(2+) contacts are provided by Asp-517 and Asp-521. 3 consecutive transmembrane segments (helical) span residues 587–607 (FAIIPAIFTIAIPKMQLMNIM), 615–635 (AILSALIFNAIIIPALIPIAM), and 654–674 (IVFGFGGIIVPFVGIKIIDMI).

The protein belongs to the cation transport ATPase (P-type) (TC 3.A.3) family. Type IA subfamily. As to quaternary structure, the system is composed of three essential subunits: KdpA, KdpB and KdpC.

It is found in the cell membrane. The enzyme catalyses K(+)(out) + ATP + H2O = K(+)(in) + ADP + phosphate + H(+). Its function is as follows. Part of the high-affinity ATP-driven potassium transport (or Kdp) system, which catalyzes the hydrolysis of ATP coupled with the electrogenic transport of potassium into the cytoplasm. This subunit is responsible for energy coupling to the transport system and for the release of the potassium ions to the cytoplasm. In Clostridium acetobutylicum (strain ATCC 824 / DSM 792 / JCM 1419 / IAM 19013 / LMG 5710 / NBRC 13948 / NRRL B-527 / VKM B-1787 / 2291 / W), this protein is Potassium-transporting ATPase ATP-binding subunit.